Here is a 702-residue protein sequence, read N- to C-terminus: ATP-dependent zinc metalloprotease FtsH (702 aa).

Residues 1–26 (MKKRNKGLVEQTTTEKNNFSRKTAWK) lie on the Cytoplasmic side of the membrane. A helical transmembrane segment spans residues 27-47 (VFWWVIILAVVIGVLAYIFSP). Topologically, residues 48–175 (RAATAVVESW…FIAPDTRARD (128 aa)) are extracellular. The chain crosses the membrane as a helical span at residues 176 to 196 (VLNGLFGLLPIIIFVVFFLLF). Residues 197 to 702 (WRSARGISAG…EVKPESETNS (506 aa)) lie on the Cytoplasmic side of the membrane. 271 to 278 (GPPGTGKT) is a binding site for ATP. Histidine 493 lines the Zn(2+) pocket. Residue glutamate 494 is part of the active site. The Zn(2+) site is built by histidine 497 and aspartate 572. Residues 682–702 (EQQAKQKLNKSEVKPESETNS) form a disordered region. A compositionally biased stretch (basic and acidic residues) spans 690–702 (NKSEVKPESETNS).

The protein in the central section; belongs to the AAA ATPase family. This sequence in the C-terminal section; belongs to the peptidase M41 family. Homohexamer. Requires Zn(2+) as cofactor.

Its subcellular location is the cell membrane. Functionally, acts as a processive, ATP-dependent zinc metallopeptidase for both cytoplasmic and membrane proteins. Plays a role in the quality control of integral membrane proteins. In Mycoplasma genitalium (strain ATCC 33530 / DSM 19775 / NCTC 10195 / G37) (Mycoplasmoides genitalium), this protein is ATP-dependent zinc metalloprotease FtsH.